The primary structure comprises 231 residues: Axial regulator YABBY 4 (231 aa).

Residues 26 to 53 (CGFCTTILLVSVPFTSLSMVVTVRCGHC) form a C4-type zinc finger. Disordered regions lie at residues 98 to 120 (KVNQEKENSPTTLVSSSDNEDED) and 211 to 231 (NNGFRERKAQRHSIWGKSPFE).

Belongs to the YABBY family. Interacts with SPL/NZZ.

The protein resides in the nucleus. Essential for the formation and the abaxial-adaxial asymmetric growth of the ovule outer integument. This chain is Axial regulator YABBY 4 (YAB4), found in Arabidopsis thaliana (Mouse-ear cress).